Here is a 125-residue protein sequence, read N- to C-terminus: Small ribosomal subunit protein uS13 (125 aa).

Residues 93–125 are disordered; it reads RKGLPVRGQRTKTNARTRKGPKRTVAGKKKAGR.

The protein belongs to the universal ribosomal protein uS13 family. In terms of assembly, part of the 30S ribosomal subunit. Forms a loose heterodimer with protein S19. Forms two bridges to the 50S subunit in the 70S ribosome.

Located at the top of the head of the 30S subunit, it contacts several helices of the 16S rRNA. In the 70S ribosome it contacts the 23S rRNA (bridge B1a) and protein L5 of the 50S subunit (bridge B1b), connecting the 2 subunits; these bridges are implicated in subunit movement. Contacts the tRNAs in the A and P-sites. This Arthrobacter sp. (strain FB24) protein is Small ribosomal subunit protein uS13.